A 456-amino-acid polypeptide reads, in one-letter code: Cytochrome P450 monooxygenase avaH (456 aa).

A helical membrane pass occupies residues leucine 243–isoleucine 263. Cysteine 403 lines the heme pocket.

It belongs to the cytochrome P450 family. Heme serves as cofactor.

Its subcellular location is the membrane. It functions in the pathway secondary metabolite biosynthesis. Its function is as follows. Cytochrome P450 monooxygenase; part of the cluster that mediates the biosynthesis of a highly modified cyclo-arginine-tryptophan dipeptide (cRW). The first step of the pathway is perfornmed by the arginine-containing cyclodipeptide synthase (RCPDS) avaA that acts as the scaffold-generating enzyme and is responsible for formation of the cyclo-Arg-Trp (cRW) diketopiperazine. AvaB then acts as a multifunctional flavoenzyme that is responsible for generating the cyclo-Arg-formylkynurenine DKP, which can be deformylated by avaC. AvaB then further catalyzes an additional N-oxidation followed by cyclization and dehydration. The next step is an N-acetylation of the guanidine group catalyzed by the arginine N-acetyltransferase avaD. The roles of the additional enzymes identified within the ava cluster still have to be determined. This chain is Cytochrome P450 monooxygenase avaH, found in Aspergillus versicolor.